We begin with the raw amino-acid sequence, 352 residues long: Probable transcription factor At1g11510 (352 aa).

Disordered regions lie at residues 1–132 (MSRR…GGEE) and 239–269 (MKSNEKSKKSSKFESVKHELDSSLPNSKNNC). Acidic residues predominate over residues 56 to 66 (SGSDEETDSDS). 3 stretches are compositionally biased toward basic and acidic residues: residues 89–101 (KTSEKSGAKRSLE), 117–132 (VSGEEEKKKSGGGGEE), and 241–259 (SNEKSKKSSKFESVKHELD).

The protein belongs to the GeBP family.

The polypeptide is Probable transcription factor At1g11510 (Arabidopsis thaliana (Mouse-ear cress)).